Consider the following 156-residue polypeptide: Cyanate hydratase (156 aa).

Catalysis depends on residues Arg96, Glu99, and Ser122.

It belongs to the cyanase family. As to quaternary structure, homodecamer composed of five homodimers.

It catalyses the reaction cyanate + hydrogencarbonate + 3 H(+) = NH4(+) + 2 CO2. Catalyzes the reaction of cyanate with bicarbonate to produce ammonia and carbon dioxide. The sequence is that of Cyanate hydratase (cynS) from Escherichia coli O157:H7.